We begin with the raw amino-acid sequence, 210 residues long: Protein GET1 (210 aa).

Residues 1 to 4 are Lumenal-facing; sequence MASL. A helical membrane pass occupies residues 5-24; that stretch reads LIIVFLSHVVTYLINTIGAT. At 25 to 110 the chain is on the cytoplasmic side; sequence TVDNLLWLLY…SFDLTVKSVR (86 aa). A coiled-coil region spans residues 43–97; that stretch reads RTAVEQRRLKGEVVQLKREMKSTSSQDEFAKWAKLRRRHDKAMEEYEAKNKALGK. A helical membrane pass occupies residues 111–131; it reads FFSTTGLKFFLQFWYSKTPMF. Over 132–155 the chain is Lumenal; it reads ELPRGWVPWQVEWVLSFPRAPLGT. A helical membrane pass occupies residues 156–172; sequence VSIQVWSGVCTTVVSLA. Residues 173-210 are Cytoplasmic-facing; that stretch reads GDALGVVIQSLILKMTKRGVARTSEGRPSQPMALKKEL.

Belongs to the WRB/GET1 family. As to quaternary structure, interacts with GET3.

The protein localises to the endoplasmic reticulum membrane. Its function is as follows. Required for the post-translational delivery of tail-anchored (TA) proteins to the endoplasmic reticulum. Acts as a membrane receptor for soluble GET3, which recognizes and selectively binds the transmembrane domain of TA proteins in the cytosol. This is Protein GET1 from Uncinocarpus reesii (strain UAMH 1704).